Reading from the N-terminus, the 297-residue chain is Acetyl-coenzyme A carboxylase carboxyl transferase subunit beta (297 aa).

Positions 27 to 296 (LWHKCPSCEA…PEQAREAAAV (270 aa)) constitute a CoA carboxyltransferase N-terminal domain. Residues Cys31, Cys34, Cys50, and Cys53 each contribute to the Zn(2+) site. Residues 31 to 53 (CPSCEAVLYRPELEKTLDVCPKC) form a C4-type zinc finger.

This sequence belongs to the AccD/PCCB family. As to quaternary structure, acetyl-CoA carboxylase is a heterohexamer composed of biotin carboxyl carrier protein (AccB), biotin carboxylase (AccC) and two subunits each of ACCase subunit alpha (AccA) and ACCase subunit beta (AccD). Requires Zn(2+) as cofactor.

It localises to the cytoplasm. It catalyses the reaction N(6)-carboxybiotinyl-L-lysyl-[protein] + acetyl-CoA = N(6)-biotinyl-L-lysyl-[protein] + malonyl-CoA. The protein operates within lipid metabolism; malonyl-CoA biosynthesis; malonyl-CoA from acetyl-CoA: step 1/1. Its function is as follows. Component of the acetyl coenzyme A carboxylase (ACC) complex. Biotin carboxylase (BC) catalyzes the carboxylation of biotin on its carrier protein (BCCP) and then the CO(2) group is transferred by the transcarboxylase to acetyl-CoA to form malonyl-CoA. This chain is Acetyl-coenzyme A carboxylase carboxyl transferase subunit beta, found in Pseudomonas putida (strain GB-1).